A 380-amino-acid chain; its full sequence is Cytochrome b (380 aa).

Transmembrane regions (helical) follow at residues 34–54 (FGSL…LLAA), 78–99 (WLIR…YLHI), 114–134 (WNTG…GYVL), and 179–199 (FFTL…IHLT). Residues histidine 84 and histidine 98 each coordinate heme b. Residues histidine 183 and histidine 197 each coordinate heme b. An a ubiquinone-binding site is contributed by histidine 202. A run of 4 helical transmembrane segments spans residues 227-247 (TKDI…ALFS), 289-309 (LGGV…PLLH), 321-341 (LSQL…WIGS), and 348-368 (FIII…ILFP).

It belongs to the cytochrome b family. In terms of assembly, the cytochrome bc1 complex contains 11 subunits: 3 respiratory subunits (MT-CYB, CYC1 and UQCRFS1), 2 core proteins (UQCRC1 and UQCRC2) and 6 low-molecular weight proteins (UQCRH/QCR6, UQCRB/QCR7, UQCRQ/QCR8, UQCR10/QCR9, UQCR11/QCR10 and a cleavage product of UQCRFS1). This cytochrome bc1 complex then forms a dimer. Heme b serves as cofactor.

Its subcellular location is the mitochondrion inner membrane. Component of the ubiquinol-cytochrome c reductase complex (complex III or cytochrome b-c1 complex) that is part of the mitochondrial respiratory chain. The b-c1 complex mediates electron transfer from ubiquinol to cytochrome c. Contributes to the generation of a proton gradient across the mitochondrial membrane that is then used for ATP synthesis. The protein is Cytochrome b (MT-CYB) of Eudyptes chrysolophus (Macaroni penguin).